The primary structure comprises 181 residues: ADP-ribosylation factor 1 (181 aa).

The N-myristoyl glycine moiety is linked to residue Gly-2. Residues 25-32 (LDGAGKTT), Thr-48, Gly-70, 126-129 (NKQD), and 160-161 (AT) contribute to the GTP site. Lys-127 participates in a covalent cross-link: Glycyl lysine isopeptide (Lys-Gly) (interchain with G-Cter in ubiquitin).

Belongs to the small GTPase superfamily. Arf family. Interacts with RUD3. Interacts with VPS13 (via C-terminal part); the interaction is direct.

The protein localises to the golgi apparatus. The catalysed reaction is GTP + H2O = GDP + phosphate + H(+). In terms of biological role, GTP-binding protein involved in Golgi vesicle trafficking. May modulate vesicle budding and uncoating within the Golgi apparatus. May recruit the lipid transfer protein VPS13 to Golgi membranes. Recruits polyadenylate-binding protein PAB1 to COPI vesicles, and this is required for correct localization of the asymmetrically distributed ASH1 mRNA. This Saccharomyces cerevisiae (strain ATCC 204508 / S288c) (Baker's yeast) protein is ADP-ribosylation factor 1 (ARF1).